Here is a 365-residue protein sequence, read N- to C-terminus: Chorismate synthase (365 aa).

R46 serves as a coordination point for NADP(+). Residues 123–125 (RSS), 241–242 (NG), G281, 296–300 (KPTPS), and R322 each bind FMN.

It belongs to the chorismate synthase family. In terms of assembly, homotetramer. FMNH2 serves as cofactor.

It carries out the reaction 5-O-(1-carboxyvinyl)-3-phosphoshikimate = chorismate + phosphate. It functions in the pathway metabolic intermediate biosynthesis; chorismate biosynthesis; chorismate from D-erythrose 4-phosphate and phosphoenolpyruvate: step 7/7. Functionally, catalyzes the anti-1,4-elimination of the C-3 phosphate and the C-6 proR hydrogen from 5-enolpyruvylshikimate-3-phosphate (EPSP) to yield chorismate, which is the branch point compound that serves as the starting substrate for the three terminal pathways of aromatic amino acid biosynthesis. This reaction introduces a second double bond into the aromatic ring system. The sequence is that of Chorismate synthase from Helicobacter pylori (strain Shi470).